A 290-amino-acid polypeptide reads, in one-letter code: 33 kDa chaperonin (290 aa).

2 disulfide bridges follow: C235-C237 and C268-C271.

The protein belongs to the HSP33 family. Under oxidizing conditions two disulfide bonds are formed involving the reactive cysteines. Under reducing conditions zinc is bound to the reactive cysteines and the protein is inactive.

It localises to the cytoplasm. Its function is as follows. Redox regulated molecular chaperone. Protects both thermally unfolding and oxidatively damaged proteins from irreversible aggregation. Plays an important role in the bacterial defense system toward oxidative stress. The chain is 33 kDa chaperonin from Streptococcus pyogenes serotype M49.